Consider the following 365-residue polypeptide: Heterogeneous nuclear ribonucleoproteins A1 homolog (365 aa).

The globular A domain stretch occupies residues 4–94; sequence SEAPNEPEQL…EPKRAVSRED (91 aa). 2 RRM domains span residues 14–97 and 105–184; these read RKLF…DSSR and KKIF…LSKQ. The globular B domain stretch occupies residues 95 to 185; that stretch reads SSRPGAHLTV…QVRKALSKQE (91 aa). Disordered regions lie at residues 175-208 and 328-365; these read SQVR…RGGF and GPMK…GRRF. 2 stretches are compositionally biased toward gly residues: residues 198–208 and 330–365; these read GSGNYGSRGGF and MKGG…GRRF. Residues 321–359 are nuclear targeting sequence; that stretch reads SQSSSNFGPMKGGNYGGGRNSGPYGGGYGGGSASSSSGY.

It is found in the nucleus. The protein resides in the cytoplasm. Functionally, this protein is a component of ribonucleosomes. The polypeptide is Heterogeneous nuclear ribonucleoproteins A1 homolog (hnrnpa1) (Xenopus laevis (African clawed frog)).